The primary structure comprises 393 residues: NAD(P)H-quinone oxidoreductase subunit H, chloroplastic (393 aa).

It belongs to the complex I 49 kDa subunit family. NDH is composed of at least 16 different subunits, 5 of which are encoded in the nucleus.

The protein localises to the plastid. Its subcellular location is the chloroplast thylakoid membrane. It carries out the reaction a plastoquinone + NADH + (n+1) H(+)(in) = a plastoquinol + NAD(+) + n H(+)(out). It catalyses the reaction a plastoquinone + NADPH + (n+1) H(+)(in) = a plastoquinol + NADP(+) + n H(+)(out). In terms of biological role, NDH shuttles electrons from NAD(P)H:plastoquinone, via FMN and iron-sulfur (Fe-S) centers, to quinones in the photosynthetic chain and possibly in a chloroplast respiratory chain. The immediate electron acceptor for the enzyme in this species is believed to be plastoquinone. Couples the redox reaction to proton translocation, and thus conserves the redox energy in a proton gradient. This chain is NAD(P)H-quinone oxidoreductase subunit H, chloroplastic, found in Angiopteris evecta (Mule's foot fern).